The following is a 533-amino-acid chain: Nitrogen fixation protein AnfA (533 aa).

The segment at 33–193 (ILYKISQIIT…PLVELYLIEN (161 aa)) is a domain. One can recognise a GAF domain in the interval 46 to 186 (DLADALSIVL…MIATMIAPLV (141 aa)). Residues 219–448 (IIGNSKPMQE…LENVMERAVI (230 aa)) enclose the Sigma-54 factor interaction domain. Residues 247-254 (GESGVGKE) and 310-319 (ADGGTIFLDE) each bind ATP. Positions 501-520 (IGEAAKELGLARRMLGVRME) form a DNA-binding region, H-T-H motif.

Its function is as follows. AnfA is essential for nitrogen fixation under Mo- and V-deficient conditions. It is required for the regulation of nitrogenase 3 transcription. Interacts with sigma-54. The chain is Nitrogen fixation protein AnfA (anfA) from Azotobacter vinelandii.